The chain runs to 568 residues: Vitamin H transporter 1 (568 aa).

The next 12 helical transmembrane spans lie at 85–105 (IIPC…TVSL), 123–143 (GYSA…YIIF), 158–178 (IWVS…AVLG), 187–207 (YVAL…GLAY), 222–242 (IGWY…VSAG), 257–277 (WMFL…PWWL), 345–365 (VWPF…IFNY), 384–404 (LLNA…MPLY), 411–431 (FSFF…ANYA), 439–459 (GGLL…MAWC), 470–490 (VGVA…SVVT), and 508–528 (NDVC…EFLL). Positions 547 to 568 (VEDEQEMTDIKPALPSSQQADA) are disordered.

It belongs to the major facilitator superfamily. Allantoate permease family.

The protein localises to the membrane. Involved in uptake of biotin and desthiobiotin with the concomitant entry of protons. The protein is Vitamin H transporter 1 (vht1) of Schizosaccharomyces pombe (strain 972 / ATCC 24843) (Fission yeast).